We begin with the raw amino-acid sequence, 887 residues long: 3-hydroxy-3-methylglutaryl-coenzyme A reductase (887 aa).

At 1 to 9 (MLSRLFRMH) the chain is on the cytoplasmic side. The helical transmembrane segment at 10–39 (GLFVASHPWEVIVGTVTLTICMMSMNMFTG) threads the bilayer. Residues 40 to 56 (NNKICGWNYECPKFEED) are Lumenal-facing. Residues 57–78 (VLSSDIIILTITRCIAILYIYF) form a helical membrane-spanning segment. One can recognise an SSD domain in the interval 61 to 218 (DIIILTITRC…MTFFPACVSL (158 aa)). The INSIG-binding motif signature appears at 75-78 (YIYF). Residues 79 to 89 (QFQNLRQLGSK) lie on the Cytoplasmic side of the membrane. Lys-89 participates in a covalent cross-link: Glycyl lysine isopeptide (Lys-Gly) (interchain with G-Cter in ubiquitin). The chain crosses the membrane as a helical span at residues 90–114 (YILGIAGLFTIFSSFVFSTVVIHFL). Residues 115–123 (DKELTGLNE) lie on the Lumenal side of the membrane. Residues 124-149 (ALPFFLLLIDLSRASALAKFALSSNS) traverse the membrane as a helical segment. Topologically, residues 150 to 159 (QDEVRENIAR) are cytoplasmic. A helical transmembrane segment spans residues 160–187 (GMAILGPTFTLDALVECLVIGVGTMSGV). At 188–191 (RQLE) the chain is on the lumenal side. The helical transmembrane segment at 192–220 (IMCCFGCMSVLANYFVFMTFFPACVSLVL) threads the bilayer. The Cytoplasmic segment spans residues 221–248 (ELSRESREGRPIWQLSHFARVLEEEENK). Lys-248 participates in a covalent cross-link: Glycyl lysine isopeptide (Lys-Gly) (interchain with G-Cter in ubiquitin). A helical membrane pass occupies residues 249 to 275 (PNPVTQRVKMIMSLGLVLVHAHSRWIA). Residues 276-314 (DPSPQNSTAEQSKVSLGLAEDVSKRIEPSVSLWQFYLSK) lie on the Lumenal side of the membrane. A glycan (N-linked (GlcNAc...) asparagine) is linked at Asn-281. Residues 315-339 (MISMDIEQVITLSLALLLAVKYIFF) traverse the membrane as a helical segment. Over 340-887 (EQAETESTLS…LQGTCTKKAA (548 aa)) the chain is Cytoplasmic. Active-site charge relay system residues include Glu-558, Lys-690, and Asp-766. His-865 functions as the Proton donor in the catalytic mechanism. Ser-871 carries the phosphoserine; by AMPK modification.

It belongs to the HMG-CoA reductase family. Homotetramer. Homodimer. Interacts (via its SSD) with INSIG1; the interaction, accelerated by sterols, leads to the recruitment of HMGCR to AMFR/gp78 for its ubiquitination by the sterol-mediated ERAD pathway. Interacts with UBIAD1. Post-translationally, undergoes sterol-mediated ubiquitination and ER-associated degradation (ERAD). Accumulation of sterols in the endoplasmic reticulum (ER) membrane, triggers binding of the reductase to the ER membrane protein INSIG1 or INSIG2. The INSIG1 binding leads to the recruitment of the ubiquitin ligase, AMFR/gp78, RNF139 or RNF145, initiating ubiquitination of the reductase. The ubiquitinated reductase is then extracted from the ER membrane and delivered to cytosolic 26S proteosomes by a mechanism probably mediated by the ATPase Valosin-containing protein VCP/p97. The INSIG2-binding leads to the recruitment of the ubiquitin ligase RNF139, initiating ubiquitination of the reductase. Lys-248 is the main site of ubiquitination. Ubiquitination is enhanced by the presence of a geranylgeranylated protein. N-glycosylated. Deglycosylated by NGLY1 on release from the endoplasmic reticulum (ER) in a sterol-mediated manner. In terms of processing, phosphorylated. Phosphorylation at Ser-871 reduces the catalytic activity.

Its subcellular location is the endoplasmic reticulum membrane. It is found in the peroxisome membrane. It catalyses the reaction (R)-mevalonate + 2 NADP(+) + CoA = (3S)-3-hydroxy-3-methylglutaryl-CoA + 2 NADPH + 2 H(+). Its pathway is metabolic intermediate biosynthesis; (R)-mevalonate biosynthesis; (R)-mevalonate from acetyl-CoA: step 3/3. With respect to regulation, regulated by a negative feedback mechanism through sterols and non-sterol metabolites derived from mevalonate. Phosphorylation at Ser-871 down-regulates the catalytic activity. Catalyzes the conversion of (3S)-hydroxy-3-methylglutaryl-CoA (HMG-CoA) to mevalonic acid, the rate-limiting step in the synthesis of cholesterol and other isoprenoids, thus plays a critical role in cellular cholesterol homeostasis. In Rattus norvegicus (Rat), this protein is 3-hydroxy-3-methylglutaryl-coenzyme A reductase (Hmgcr).